We begin with the raw amino-acid sequence, 257 residues long: Thiazole synthase (257 aa).

The active-site Schiff-base intermediate with DXP is K96. 1-deoxy-D-xylulose 5-phosphate is bound by residues G157, 184 to 185 (AG), and 206 to 207 (NT).

The protein belongs to the ThiG family. Homotetramer. Forms heterodimers with either ThiH or ThiS.

The protein resides in the cytoplasm. The enzyme catalyses [ThiS sulfur-carrier protein]-C-terminal-Gly-aminoethanethioate + 2-iminoacetate + 1-deoxy-D-xylulose 5-phosphate = [ThiS sulfur-carrier protein]-C-terminal Gly-Gly + 2-[(2R,5Z)-2-carboxy-4-methylthiazol-5(2H)-ylidene]ethyl phosphate + 2 H2O + H(+). Its pathway is cofactor biosynthesis; thiamine diphosphate biosynthesis. In terms of biological role, catalyzes the rearrangement of 1-deoxy-D-xylulose 5-phosphate (DXP) to produce the thiazole phosphate moiety of thiamine. Sulfur is provided by the thiocarboxylate moiety of the carrier protein ThiS. In vitro, sulfur can be provided by H(2)S. This Rhizobium rhizogenes (strain K84 / ATCC BAA-868) (Agrobacterium radiobacter) protein is Thiazole synthase.